Here is a 251-residue protein sequence, read N- to C-terminus: Triosephosphate isomerase (251 aa).

Position 9-11 (9-11) interacts with substrate; it reads NWK. The active-site Electrophile is the His-95. The active-site Proton acceptor is Glu-167. Substrate-binding positions include Gly-173, Ser-212, and 233–234; that span reads GG.

This sequence belongs to the triosephosphate isomerase family. As to quaternary structure, homodimer.

Its subcellular location is the cytoplasm. The catalysed reaction is D-glyceraldehyde 3-phosphate = dihydroxyacetone phosphate. It functions in the pathway carbohydrate biosynthesis; gluconeogenesis. Its pathway is carbohydrate degradation; glycolysis; D-glyceraldehyde 3-phosphate from glycerone phosphate: step 1/1. In terms of biological role, involved in the gluconeogenesis. Catalyzes stereospecifically the conversion of dihydroxyacetone phosphate (DHAP) to D-glyceraldehyde-3-phosphate (G3P). The protein is Triosephosphate isomerase of Pseudomonas entomophila (strain L48).